The chain runs to 770 residues: Tripartite terminase subunit 1 (770 aa).

The segment at 199 to 227 (CAICFEELCITANQGETLHRRLLGCICDH) adopts a C3H1-type zinc-finger fold. An ATP-binding site is contributed by 675–682 (FTSVFHCG).

Belongs to the herpesviridae TRM1 protein family. In terms of assembly, associates with TRM2 and TRM3 to form the tripartite terminase complex. Interacts with portal protein.

It is found in the host nucleus. Its function is as follows. Component of the molecular motor that translocates viral genomic DNA in empty capsid during DNA packaging. Forms a tripartite terminase complex together with TRM2 and TRM3 in the host cytoplasm. Once the complex reaches the host nucleus, it interacts with the capsid portal vertex. This portal forms a ring in which genomic DNA is translocated into the capsid. TRM1 carries an endonuclease activity that plays an important role for the cleavage of concatemeric viral DNA into unit length genomes. In Varicella-zoster virus (strain Dumas) (HHV-3), this protein is Tripartite terminase subunit 1.